A 174-amino-acid chain; its full sequence is MTTPPLAQFSGQQQQQTQAARDVNTASLCRIGQETVQDIVLRTMEIFQLLRNMQLPNGVTYHPNTHQDRLGKLQEHLRTLSVLFRKLRLVYDKCNENCAGLEPIPSEQLIPYVEDDSSKLEDRMANQLRAASEERREVLEVNKKLKQKNQQLKMIMDQLRNLIWEINSMLAVRS.

Residues 113 to 166 (VEDDSSKLEDRMANQLRAASEERREVLEVNKKLKQKNQQLKMIMDQLRNLIWEI) adopt a coiled-coil conformation.

It belongs to the Mediator complex subunit 30 family. Component of the Mediator complex.

It localises to the nucleus. Its function is as follows. Component of the Mediator complex, a coactivator involved in the regulated transcription of nearly all RNA polymerase II-dependent genes. Mediator functions as a bridge to convey information from gene-specific regulatory proteins to the basal RNA polymerase II transcription machinery. Mediator is recruited to promoters by direct interactions with regulatory proteins and serves as a scaffold for the assembly of a functional preinitiation complex with RNA polymerase II and the general transcription factors. The chain is Mediator of RNA polymerase II transcription subunit 30 (med30) from Danio rerio (Zebrafish).